The sequence spans 132 residues: Small ribosomal subunit protein uS8 (132 aa).

The protein belongs to the universal ribosomal protein uS8 family. As to quaternary structure, part of the 30S ribosomal subunit. Contacts proteins S5 and S12.

Its function is as follows. One of the primary rRNA binding proteins, it binds directly to 16S rRNA central domain where it helps coordinate assembly of the platform of the 30S subunit. The protein is Small ribosomal subunit protein uS8 of Streptococcus suis (strain 98HAH33).